The following is a 629-amino-acid chain: tRNA uridine 5-carboxymethylaminomethyl modification enzyme MnmG (629 aa).

FAD is bound by residues 13-18 (GGGHAG), Val125, and Ser180. Residue 273–287 (GPRYCPSIEDKVMRF) participates in NAD(+) binding. Position 370 (Gln370) interacts with FAD.

The protein belongs to the MnmG family. In terms of assembly, homodimer. Heterotetramer of two MnmE and two MnmG subunits. FAD is required as a cofactor.

The protein resides in the cytoplasm. Its function is as follows. NAD-binding protein involved in the addition of a carboxymethylaminomethyl (cmnm) group at the wobble position (U34) of certain tRNAs, forming tRNA-cmnm(5)s(2)U34. This chain is tRNA uridine 5-carboxymethylaminomethyl modification enzyme MnmG, found in Enterobacter sp. (strain 638).